The following is a 493-amino-acid chain: tRNA(Ile)-lysidine synthase, chloroplastic (493 aa).

68–73 serves as a coordination point for ATP; the sequence is SGGQDS.

The protein belongs to the tRNA(Ile)-lysidine synthase family.

The protein resides in the plastid. Its subcellular location is the chloroplast. It catalyses the reaction cytidine(34) in tRNA(Ile2) + L-lysine + ATP = lysidine(34) in tRNA(Ile2) + AMP + diphosphate + H(+). Ligates lysine onto the cytidine present at position 34 of the AUA codon-specific tRNA(Ile) that contains the anticodon CAU, in an ATP-dependent manner. Cytidine is converted to lysidine, thus changing the amino acid specificity of the tRNA from methionine to isoleucine. The protein is tRNA(Ile)-lysidine synthase, chloroplastic of Staurastrum punctulatum (Green alga).